The following is a 564-amino-acid chain: MHYRFLRDSFVGRVTYHLSKHKYFAHPEEAKNYIIPEKYLADYKPTLADDTSINFEKEEIDNQGEPNSSQSSSSNNTIVDNNNNNNNDVDGDKIVVTWDGDDDPENPQNWPTLQKAFFIFQISFLTTSVYMGSAVYTPGIEELMHDFGIGRVVATLPLTLFVIGYGVGPLVFSPMSENAIFGRTSIYIITLFLFVILQIPTALVNNIAGLCILRFLGGFFASPCLATGGASVADVVKFWNLPVGLAAWSLGAVCGPSFGPFFGSILTVKASWRWTFWFMCIISGFSFVMLCFTLPETFGKTLLYRKAKRLRAITGNDRITSEGEIENSKMTSHELIIDTLWRPLEITVMEPVVLLINIYIAMVYSILYLFFEVFPIYFVGVKHFTLVELGTTYMSIVIGIVIAAFIYIPVIRQKFTKPILRQEQVFPEVFIPIAIVGGILLTSGLFIFGWSANRTTHWVGPLFGAATTASGAFLIFQTLFNFMGASFKPHYIASVFASNDLFRSVIASVFPLFGAPLFDNLATPEYPVAWGSSVLGFITLVMIAIPVLFYLNGPKLRARSKYAN.

Positions 60-101 are disordered; the sequence is IDNQGEPNSSQSSSSNNTIVDNNNNNNNDVDGDKIVVTWDGD. Positions 67-88 are enriched in low complexity; sequence NSSQSSSSNNTIVDNNNNNNND. The next 12 membrane-spanning stretches (helical) occupy residues 116–136, 153–173, 184–204, 210–229, 241–262, 274–294, 358–374, 393–411, 431–451, 457–476, 489–506, and 530–551; these read AFFI…SAVY, VATL…LVFS, TSIY…TALV, LCIL…ATGG, LPVG…GPFF, WTFW…CFTL, IYIA…FEVF, YMSI…IPVI, IPIA…FGWS, HWVG…FLIF, PHYI…RSVI, and WGSS…LFYL.

Belongs to the major facilitator superfamily. CAR1 family.

It localises to the membrane. Functionally, probable transporter. Confers resistance to benomyl and methotrexate. The protein is Benomyl/methotrexate resistance protein (MDR1) of Candida albicans (Yeast).